The primary structure comprises 128 residues: UPF0102 protein Mext_0406 (128 aa).

This sequence belongs to the UPF0102 family.

In Methylorubrum extorquens (strain PA1) (Methylobacterium extorquens), this protein is UPF0102 protein Mext_0406.